A 328-amino-acid chain; its full sequence is CCAAT/enhancer-binding protein beta (328 aa).

An Asymmetric dimethylarginine; by CARM1 modification is found at Arg-3. Lys-39 is subject to N6-methylated lysine. Residues 165–274 (DSCKGPRKEE…NIAVRKSRDK (110 aa)) form a disordered region. Residues 200–231 (SVPSGSSGNLSTSSSSSPPGTPNPSESSKSAA) show a composition bias toward low complexity. Residue Thr-220 is modified to Phosphothreonine; by RPS6KA1, CDK2 and MAPK. Residues 248-264 (KCVDKHSDEYKLRRERN) show a composition bias toward basic and acidic residues. A bZIP domain is found at 254–317 (SDEYKLRRER…STLRNLFKQL (64 aa)). The tract at residues 258–278 (KLRRERNNIAVRKSRDKAKMR) is basic motif. Residues 280–287 (LETQHKVL) are leucine-zipper.

Belongs to the bZIP family. C/EBP subfamily. Binds DNA as a dimer. Interacts (not methylated) with MED23, MED26, SMARCA2, SMARCB1 and SMARCC1. In terms of processing, methylated. Methylation at Arg-3 by CARM1 and at Lys-39 by EHMT2, inhibit transactivation activity. Methylation is probably inhibited by phosphorylation at Thr-220. As to expression, specifically expressed in myelomoncytic cells.

The protein resides in the nucleus. Its function is as follows. Important transcriptional activator regulating the expression of genes involved in immune and inflammatory responses. Binds to regulatory regions of several acute-phase and cytokines genes and probably plays a role in the regulation of acute-phase reaction, inflammation and hemopoiesis. The consensus recognition site is 5'-T[TG]NNGNAA[TG]-3'. Functions in brown adipose tissue (BAT) differentiation. Regulates the transcriptional induction of peroxisome proliferator-activated receptor gamma (PPARG). Binds to the MGF and MIM-1 promoters and activates the transcription of these genes. In terms of biological role, important transcription factor regulating the expression of genes involved in immune and inflammatory responses. Also plays a significant role in adipogenesis, as well as in the gluconeogenic pathway, liver regeneration, and hematopoiesis. The consensus recognition site is 5'-T[TG]NNGNAA[TG]-3'. Its functional capacity is governed by protein interactions and post-translational protein modifications. In Gallus gallus (Chicken), this protein is CCAAT/enhancer-binding protein beta (CEBPB).